Here is a 266-residue protein sequence, read N- to C-terminus: Thiazole synthase (266 aa).

Lysine 110 acts as the Schiff-base intermediate with DXP in catalysis. Residues glycine 171, 197-198 (AG), and 219-220 (AT) each bind 1-deoxy-D-xylulose 5-phosphate.

This sequence belongs to the ThiG family. In terms of assembly, homotetramer. Forms heterodimers with either ThiH or ThiS.

Its subcellular location is the cytoplasm. It catalyses the reaction [ThiS sulfur-carrier protein]-C-terminal-Gly-aminoethanethioate + 2-iminoacetate + 1-deoxy-D-xylulose 5-phosphate = [ThiS sulfur-carrier protein]-C-terminal Gly-Gly + 2-[(2R,5Z)-2-carboxy-4-methylthiazol-5(2H)-ylidene]ethyl phosphate + 2 H2O + H(+). It participates in cofactor biosynthesis; thiamine diphosphate biosynthesis. Its function is as follows. Catalyzes the rearrangement of 1-deoxy-D-xylulose 5-phosphate (DXP) to produce the thiazole phosphate moiety of thiamine. Sulfur is provided by the thiocarboxylate moiety of the carrier protein ThiS. In vitro, sulfur can be provided by H(2)S. This chain is Thiazole synthase, found in Thermobifida fusca (strain YX).